The primary structure comprises 631 residues: Interferon-induced GTP-binding protein Mx1 (631 aa).

Positions 33-306 (DLALPAIAVI…LTSHICKSLP (274 aa)) constitute a Dynamin-type G domain. Residues 43–50 (GDQSSGKS) are G1 motif. A GTP-binding site is contributed by 43–50 (GDQSSGKS). A G2 motif region spans residues 68–70 (VTR). Residues 144-147 (DLPG) are G3 motif. GTP-binding positions include 144 to 148 (DLPGI) and 213 to 216 (TKPD). The G4 motif stretch occupies residues 213 to 216 (TKPD). The tract at residues 245 to 248 (KCRG) is G5 motif. The bundle signaling element (BSE) stretch occupies residues 307–332 (LLEDQINSSHQSASEELQKYGADIPE). Residues 332–499 (EDDRTRMSFL…HFQMEQIVYC (168 aa)) are middle domain. The segment at 333-601 (DDRTRMSFLV…TSKCSWFLEE (269 aa)) is stalk. The segment at 520–522 (KTK) is critical for lipid-binding. One can recognise a GED domain in the interval 543-631 (TTEMTQHLKA…ARQKLAKFSD (89 aa)).

Belongs to the TRAFAC class dynamin-like GTPase superfamily. Dynamin/Fzo/YdjA family. In terms of assembly, homooligomer. Oligomerizes into multimeric filamentous or ring-like structures by virtue of its stalk domain. Oligomerization is critical for GTPase activity, protein stability, and recognition of viral target structures. Interacts with TRPC1, TRPC3, TRPC4, TRPC5, TRPC6 and TRPC7. Interacts with HSPA5. Interacts with TUBB/TUBB5. Interacts with DDX39A and DDX39B. In terms of processing, ISGylated.

The protein localises to the cytoplasm. The protein resides in the nucleus. Its subcellular location is the endoplasmic reticulum membrane. It is found in the perinuclear region. Interferon-induced dynamin-like GTPase with antiviral activity against influenza A virus, (IAV), influenza B virus (IBV) and Thogoto virus (THOV). Inhibits FLUAV by interfering with the process of primary transcription, probably by affecting the viral polymerase function. The sequence is that of Interferon-induced GTP-binding protein Mx1 (Mx1) from Mus musculus (Mouse).